Consider the following 148-residue polypeptide: Ribosome maturation factor RimP (148 aa).

Belongs to the RimP family.

Its subcellular location is the cytoplasm. Functionally, required for maturation of 30S ribosomal subunits. The protein is Ribosome maturation factor RimP of Thermosipho africanus (strain TCF52B).